The sequence spans 867 residues: G-protein coupled receptor family C group 6 member A (867 aa).

The signal sequence occupies residues 1–19 (MDLMSFILLWAGLMKVAEA). Residues 20–566 (SIAQFSQLGA…EYFDWNSGFA (547 aa)) lie on the Extracellular side of the membrane. N-linked (GlcNAc...) asparagine glycosylation is found at Asn51, Asn55, Asn97, Asn296, Asn308, Asn336, Asn356, Asn370, Asn527, and Asn547. A helical transmembrane segment spans residues 567-587 (IVLLILAALGVLLLFFMSALF). Residues 588-602 (FWQRHSPVVKAAGGP) lie on the Cytoplasmic side of the membrane. The helical transmembrane segment at 603-623 (LCHLILVSLLGSFISVVFFVG) threads the bilayer. Residues 624-634 (EPSDLTCRARQ) are Extracellular-facing. A helical membrane pass occupies residues 635 to 655 (VIFGFSFTLCVSCILVKSLKI). Residues 656 to 675 (LLAFEMNFELKELLCMLYKP) lie on the Cytoplasmic side of the membrane. The helical transmembrane segment at 676 to 696 (YMIVSVGMGVQIIICTVWLTL) threads the bilayer. Over 697 to 716 (YKPFKDKEVQTESILLECNE) the chain is Extracellular. Residues 717-737 (GFYVMFWLMLGYIALLALFCF) form a helical membrane-spanning segment. Topologically, residues 738-754 (TFAYIGRKLPQKYNEAK) are cytoplasmic. The helical transmembrane segment at 755-775 (FITFSMVICLMAWIIFIPIHV) threads the bilayer. Over 776–781 (TTSGKY) the chain is Extracellular. Residues 782–802 (VPAVEMVVILISNYGILSCHF) traverse the membrane as a helical segment. The Cytoplasmic portion of the chain corresponds to 803–867 (LPKSYIILFK…LSFVPEEKHE (65 aa)).

Belongs to the G-protein coupled receptor 3 family. Homodimer; disulfide-linked.

The protein resides in the cell membrane. In terms of biological role, olfactory receptor that is activated by amino acids that act as potent odorants in fish. Displays preference for acidic amino acids such as Glu over basic amino acids. The sequence is that of G-protein coupled receptor family C group 6 member A (gprc6a) from Danio rerio (Zebrafish).